The primary structure comprises 354 residues: Uroporphyrinogen decarboxylase (354 aa).

Residues 27-31 (RQAGR), aspartate 77, tyrosine 154, serine 209, and histidine 327 contribute to the substrate site.

This sequence belongs to the uroporphyrinogen decarboxylase family. Homodimer.

It is found in the cytoplasm. It catalyses the reaction uroporphyrinogen III + 4 H(+) = coproporphyrinogen III + 4 CO2. It functions in the pathway porphyrin-containing compound metabolism; protoporphyrin-IX biosynthesis; coproporphyrinogen-III from 5-aminolevulinate: step 4/4. Its function is as follows. Catalyzes the decarboxylation of four acetate groups of uroporphyrinogen-III to yield coproporphyrinogen-III. This Methylobacillus flagellatus (strain ATCC 51484 / DSM 6875 / VKM B-1610 / KT) protein is Uroporphyrinogen decarboxylase.